The following is a 513-amino-acid chain: Bifunctional purine biosynthesis protein PurH (513 aa).

The region spanning 1–145 is the MGS-like domain; sequence MNKRAIISVY…KNFKYTTVIV (145 aa).

It belongs to the PurH family.

The catalysed reaction is (6R)-10-formyltetrahydrofolate + 5-amino-1-(5-phospho-beta-D-ribosyl)imidazole-4-carboxamide = 5-formamido-1-(5-phospho-D-ribosyl)imidazole-4-carboxamide + (6S)-5,6,7,8-tetrahydrofolate. It catalyses the reaction IMP + H2O = 5-formamido-1-(5-phospho-D-ribosyl)imidazole-4-carboxamide. It functions in the pathway purine metabolism; IMP biosynthesis via de novo pathway; 5-formamido-1-(5-phospho-D-ribosyl)imidazole-4-carboxamide from 5-amino-1-(5-phospho-D-ribosyl)imidazole-4-carboxamide (10-formyl THF route): step 1/1. The protein operates within purine metabolism; IMP biosynthesis via de novo pathway; IMP from 5-formamido-1-(5-phospho-D-ribosyl)imidazole-4-carboxamide: step 1/1. In Caldicellulosiruptor bescii (strain ATCC BAA-1888 / DSM 6725 / KCTC 15123 / Z-1320) (Anaerocellum thermophilum), this protein is Bifunctional purine biosynthesis protein PurH.